We begin with the raw amino-acid sequence, 58 residues long: Photosystem II reaction center protein K (58 aa).

A propeptide spanning residues 1-21 is cleaved from the precursor; that stretch reads MFDLYLKNLLDLSDSGTVVLA. A helical transmembrane segment spans residues 29–49; that stretch reads IFDPIVDVLPVIPVFFLLLAF.

It belongs to the PsbK family. In terms of assembly, PSII is composed of 1 copy each of membrane proteins PsbA, PsbB, PsbC, PsbD, PsbE, PsbF, PsbH, PsbI, PsbJ, PsbK, PsbL, PsbM, PsbT, PsbX, PsbY, PsbZ, Psb30/Ycf12, at least 3 peripheral proteins of the oxygen-evolving complex and a large number of cofactors. It forms dimeric complexes.

It localises to the plastid. The protein resides in the chloroplast thylakoid membrane. Its function is as follows. One of the components of the core complex of photosystem II (PSII). PSII is a light-driven water:plastoquinone oxidoreductase that uses light energy to abstract electrons from H(2)O, generating O(2) and a proton gradient subsequently used for ATP formation. It consists of a core antenna complex that captures photons, and an electron transfer chain that converts photonic excitation into a charge separation. This chain is Photosystem II reaction center protein K, found in Zygnema circumcarinatum (Green alga).